We begin with the raw amino-acid sequence, 275 residues long: MEKEKRLTKKEIFSMFIRSNFLLGSFNFERVQAMGYCYVMIPAIKKLYGPGAKRNEALQRHLEWFNTHPWLTAPIFGVTAAMEEEMANNKGIDGKAISGMKIGLMGPIAGVGDPIFWGTIRPVLAALGASLALGGNIAGPLLFFFLLNAIRLSTKYYGLKYGYVKGMEILQDLAGNRIQKLTEGASILGLFVMGALVSKWTTINIPIVVSRIKDESGKVDVQTVQNVLDSIMPGALPLGLTLLVAWMLRKGVNPLLIICGIFVIGILGYWAGFLA.

A PTS EIID domain is found at 5–274; sequence KRLTKKEIFS…GILGYWAGFL (270 aa). 5 helical membrane passes run 100–120, 127–147, 187–207, 227–247, and 255–275; these read MKIGLMGPIAGVGDPIFWGTI, LGASLALGGNIAGPLLFFFLL, ILGLFVMGALVSKWTTINIPI, VLDSIMPGALPLGLTLLVAWM, and LLIICGIFVIGILGYWAGFLA.

It is found in the cell membrane. The phosphoenolpyruvate-dependent sugar phosphotransferase system (PTS), a major carbohydrate active -transport system, catalyzes the phosphorylation of incoming sugar substrates concomitant with their translocation across the cell membrane. This system is involved in fructose transport. The protein is Fructose permease IID component (levG) of Bacillus subtilis (strain 168).